Reading from the N-terminus, the 88-residue chain is Large ribosomal subunit protein bL27 (88 aa).

Positions 1 to 24 are disordered; sequence MATKKSGGSSGNGRDSRGRRLGVK.

This sequence belongs to the bacterial ribosomal protein bL27 family.

The chain is Large ribosomal subunit protein bL27 from Ehrlichia chaffeensis (strain ATCC CRL-10679 / Arkansas).